The following is a 944-amino-acid chain: Bifunctional glutamine synthetase adenylyltransferase/adenylyl-removing enzyme (944 aa).

The segment at 1–440 (MSANSVFQQL…IFTQLIGEDD (440 aa)) is adenylyl removase. An adenylyl transferase region spans residues 448–944 (VSEFKRLWLL…LSSKQKWLDE (497 aa)).

Belongs to the GlnE family. Mg(2+) serves as cofactor.

The enzyme catalyses [glutamine synthetase]-O(4)-(5'-adenylyl)-L-tyrosine + phosphate = [glutamine synthetase]-L-tyrosine + ADP. It carries out the reaction [glutamine synthetase]-L-tyrosine + ATP = [glutamine synthetase]-O(4)-(5'-adenylyl)-L-tyrosine + diphosphate. Involved in the regulation of glutamine synthetase GlnA, a key enzyme in the process to assimilate ammonia. When cellular nitrogen levels are high, the C-terminal adenylyl transferase (AT) inactivates GlnA by covalent transfer of an adenylyl group from ATP to specific tyrosine residue of GlnA, thus reducing its activity. Conversely, when nitrogen levels are low, the N-terminal adenylyl removase (AR) activates GlnA by removing the adenylyl group by phosphorolysis, increasing its activity. The regulatory region of GlnE binds the signal transduction protein PII (GlnB) which indicates the nitrogen status of the cell. The protein is Bifunctional glutamine synthetase adenylyltransferase/adenylyl-removing enzyme of Proteus mirabilis (strain HI4320).